A 266-amino-acid chain; its full sequence is Thymidylate synthase (266 aa).

Arg24 is a binding site for dUMP. His54 contributes to the (6R)-5,10-methylene-5,6,7,8-tetrahydrofolate binding site. Residue Arg129 to Arg130 coordinates dUMP. Cys149 functions as the Nucleophile in the catalytic mechanism. DUMP is bound by residues Arg169–Asp172, Asn180, and His210–Tyr212. Asp172 provides a ligand contact to (6R)-5,10-methylene-5,6,7,8-tetrahydrofolate. Ala265 contacts (6R)-5,10-methylene-5,6,7,8-tetrahydrofolate.

It belongs to the thymidylate synthase family. Bacterial-type ThyA subfamily. In terms of assembly, homodimer.

The protein resides in the cytoplasm. It carries out the reaction dUMP + (6R)-5,10-methylene-5,6,7,8-tetrahydrofolate = 7,8-dihydrofolate + dTMP. Its pathway is pyrimidine metabolism; dTTP biosynthesis. Functionally, catalyzes the reductive methylation of 2'-deoxyuridine-5'-monophosphate (dUMP) to 2'-deoxythymidine-5'-monophosphate (dTMP) while utilizing 5,10-methylenetetrahydrofolate (mTHF) as the methyl donor and reductant in the reaction, yielding dihydrofolate (DHF) as a by-product. This enzymatic reaction provides an intracellular de novo source of dTMP, an essential precursor for DNA biosynthesis. The polypeptide is Thymidylate synthase (Mycobacterium leprae (strain TN)).